Here is a 607-residue protein sequence, read N- to C-terminus: Elongation factor 4 (607 aa).

The 183-residue stretch at 11-193 (EKIRNFSIIA…QIVEKVPAPT (183 aa)) folds into the tr-type G domain. GTP contacts are provided by residues 23-28 (DHGKST) and 140-143 (NKID).

It belongs to the TRAFAC class translation factor GTPase superfamily. Classic translation factor GTPase family. LepA subfamily.

It is found in the cell membrane. The catalysed reaction is GTP + H2O = GDP + phosphate + H(+). In terms of biological role, required for accurate and efficient protein synthesis under certain stress conditions. May act as a fidelity factor of the translation reaction, by catalyzing a one-codon backward translocation of tRNAs on improperly translocated ribosomes. Back-translocation proceeds from a post-translocation (POST) complex to a pre-translocation (PRE) complex, thus giving elongation factor G a second chance to translocate the tRNAs correctly. Binds to ribosomes in a GTP-dependent manner. The protein is Elongation factor 4 of Streptococcus gordonii (strain Challis / ATCC 35105 / BCRC 15272 / CH1 / DL1 / V288).